Here is a 199-residue protein sequence, read N- to C-terminus: Recombination protein RecR (199 aa).

The segment at 59–74 (CLNCGNVGTSDICALC) adopts a C4-type zinc-finger fold. Residues 82–176 (GELCVVEDVA…KLTSLAQGVP (95 aa)) form the Toprim domain.

Belongs to the RecR family.

May play a role in DNA repair. It seems to be involved in an RecBC-independent recombinational process of DNA repair. It may act with RecF and RecO. The protein is Recombination protein RecR of Ruegeria sp. (strain TM1040) (Silicibacter sp.).